A 364-amino-acid polypeptide reads, in one-letter code: DNA polymerase IV (364 aa).

One can recognise a UmuC domain in the interval 14–198; the sequence is IIHIDMDAFF…LPIEKFHGVG (185 aa). Aspartate 18 and aspartate 116 together coordinate Mg(2+). The active site involves glutamate 117.

The protein belongs to the DNA polymerase type-Y family. As to quaternary structure, monomer. Mg(2+) serves as cofactor.

Its subcellular location is the cytoplasm. It carries out the reaction DNA(n) + a 2'-deoxyribonucleoside 5'-triphosphate = DNA(n+1) + diphosphate. Poorly processive, error-prone DNA polymerase involved in untargeted mutagenesis. Copies undamaged DNA at stalled replication forks, which arise in vivo from mismatched or misaligned primer ends. These misaligned primers can be extended by PolIV. Exhibits no 3'-5' exonuclease (proofreading) activity. May be involved in translesional synthesis, in conjunction with the beta clamp from PolIII. This is DNA polymerase IV from Streptococcus pyogenes serotype M12 (strain MGAS2096).